The following is a 348-amino-acid chain: tRNA pseudouridine synthase D (348 aa).

Phenylalanine 27 provides a ligand contact to substrate. Aspartate 80 serves as the catalytic Nucleophile. Asparagine 129 lines the substrate pocket. One can recognise a TRUD domain in the interval 155-303; sequence GVPNYFGSQR…VEPARRAVLL (149 aa). Phenylalanine 329 contributes to the substrate binding site.

Belongs to the pseudouridine synthase TruD family.

It carries out the reaction uridine(13) in tRNA = pseudouridine(13) in tRNA. Responsible for synthesis of pseudouridine from uracil-13 in transfer RNAs. In Pectobacterium atrosepticum (strain SCRI 1043 / ATCC BAA-672) (Erwinia carotovora subsp. atroseptica), this protein is tRNA pseudouridine synthase D.